The sequence spans 84 residues: Envelope glycoprotein N (84 aa).

An N-terminal signal peptide occupies residues 1–26; the sequence is MSCKKSARQSLYVSLCLFYILVFAAA. The Virion surface portion of the chain corresponds to 27–47; the sequence is TEVDFYSPECHSHTYEIVLNS. Residues 48 to 68 form a helical membrane-spanning segment; the sequence is FSSIWLLINLFLLLCSFAIFL. At 69 to 84 the chain is on the intravirion side; the sequence is KYWCYKTFASETVKGY.

This sequence belongs to the herpesviridae glycoprotein N family. As to quaternary structure, interacts (via N-terminus) with gM (via N-terminus). The gM-gN heterodimer forms the gCII complex.

It is found in the virion membrane. The protein resides in the host membrane. Its subcellular location is the host Golgi apparatus. It localises to the host trans-Golgi network. Envelope glycoprotein necessary for proper maturation of gM and modulation of its membrane fusion activity. Also plays a critical role in virion morphogenesis. This chain is Envelope glycoprotein N, found in Homo sapiens (Human).